We begin with the raw amino-acid sequence, 169 residues long: N-alpha-acetyltransferase 50 (169 aa).

The N-acetyltransferase domain occupies 6 to 155 (IELGDVTPHN…DAHVLQKNLK (150 aa)). T12 bears the Phosphothreonine mark. Y31 is a substrate binding site. Residues K34 and K37 each carry the N6-acetyllysine modification. Residue Y73 is part of the active site. Position 75 (M75) interacts with substrate. 77 to 90 (LGCLAPYRRLGIGT) serves as a coordination point for acetyl-CoA. Position 110 is a phosphotyrosine (Y110). Residue H112 is part of the active site. CoA is bound at residue 117-126 (NESAIDFYRK). The segment at 138-141 (YYKR) is substrate. Position 140 is an N6-acetyllysine (K140).

The protein belongs to the acetyltransferase family. GNAT subfamily. In terms of assembly, component of the N-terminal acetyltransferase E (NatE) complex at least composed of NAA10, NAA15 and NAA50. Interacts with NAA10. Interacts with NAA15. Predominantly interacts with NAA15 in the N-terminal acetyltransferase A complex (NatA complex); the interactions reduce the acetylation activity of the NatA complex. Component of the N-terminal acetyltransferase E (NatE)/HYPK complex at least composed of NAA10, NAA15, NAA50 and HYPK. Within the complex interacts with NAA15. Its capacity to interact with the NatA complex is reduced by HYPK. Interacts with NAA35.

It localises to the cytoplasm. Its subcellular location is the nucleus. It carries out the reaction N-terminal L-methionyl-L-alanyl-[protein] + acetyl-CoA = N-terminal N(alpha)-acetyl-L-methionyl-L-alanyl-[protein] + CoA + H(+). It catalyses the reaction N-terminal L-methionyl-L-seryl-[protein] + acetyl-CoA = N-terminal N(alpha)-acetyl-L-methionyl-L-seryl-[protein] + CoA + H(+). The catalysed reaction is N-terminal L-methionyl-L-valyl-[protein] + acetyl-CoA = N-terminal N(alpha)-acetyl-L-methionyl-L-valyl-[protein] + CoA + H(+). The enzyme catalyses N-terminal L-methionyl-L-threonyl-[protein] + acetyl-CoA = N-terminal N(alpha)-acetyl-L-methionyl-L-threonyl-[protein] + CoA + H(+). It carries out the reaction N-terminal L-methionyl-L-lysyl-[protein] + acetyl-CoA = N-terminal N(alpha)-acetyl-L-methionyl-L-lysyl-[protein] + CoA + H(+). It catalyses the reaction N-terminal L-methionyl-L-leucyl-[protein] + acetyl-CoA = N-terminal N(alpha)-acetyl-L-methionyl-L-leucyl-[protein] + CoA + H(+). The catalysed reaction is N-terminal L-methionyl-L-phenylalanyl-[protein] + acetyl-CoA = N-terminal N(alpha)-acetyl-L-methionyl-L-phenylalanyl-[protein] + CoA + H(+). The enzyme catalyses N-terminal L-methionyl-L-tyrosyl-[protein] + acetyl-CoA = N-terminal N(alpha)-acetyl-L-methionyl-L-tyrosyl-[protein] + CoA + H(+). N-alpha-acetyltransferase that acetylates the N-terminus of proteins that retain their initiating methionine. Has a broad substrate specificity: able to acetylate the initiator methionine of most peptides, except for those with a proline in second position. Also displays N-epsilon-acetyltransferase activity by mediating acetylation of the side chain of specific lysines on proteins. Autoacetylates in vivo. The relevance of N-epsilon-acetyltransferase activity is however unclear: able to acetylate H4 in vitro, but this result has not been confirmed in vivo. Component of N-alpha-acetyltransferase complexes containing NAA10 and NAA15, which has N-alpha-acetyltransferase activity. Does not influence the acetyltransferase activity of NAA10. However, it negatively regulates the N-alpha-acetyltransferase activity of the N-terminal acetyltransferase A complex (also called the NatA complex). The multiprotein complexes probably constitute the major contributor for N-terminal acetylation at the ribosome exit tunnel, with NAA10 acetylating all amino termini that are devoid of methionine and NAA50 acetylating other peptides. Required for sister chromatid cohesion during mitosis by promoting binding of CDCA5/sororin to cohesin: may act by counteracting the function of NAA10. This Mus musculus (Mouse) protein is N-alpha-acetyltransferase 50.